The sequence spans 152 residues: Endoribonuclease YbeY (152 aa).

Residues histidine 113, histidine 117, and histidine 123 each coordinate Zn(2+).

It belongs to the endoribonuclease YbeY family. Requires Zn(2+) as cofactor.

The protein localises to the cytoplasm. Single strand-specific metallo-endoribonuclease involved in late-stage 70S ribosome quality control and in maturation of the 3' terminus of the 16S rRNA. The sequence is that of Endoribonuclease YbeY from Paracidovorax citrulli (strain AAC00-1) (Acidovorax citrulli).